A 96-amino-acid polypeptide reads, in one-letter code: Gastrolith matrix protein (96 aa).

9 consecutive repeat copies span residues 11–15 (GSAGF), 16–20 (GSTNF), 21–25 (GSSGF), 30–34 (GSTGF), 35–39 (GSAGF), 50–54 (GSAAF), 55–59 (GSSSF), 65–69 (GSTGF), and 70–74 (GSSSF). Residues 11–74 (GSAGFGSTNF…GSTGFGSSSF (64 aa)) are 9 X 5 AA tandem repeat of G-S-X-X-F. The tract at residues 75–96 (GSTSGLPYLVVIPNNPAVGGLR) is disordered.

The N-terminus is blocked. In terms of tissue distribution, expressed in the gastroliths.

It localises to the secreted. Its function is as follows. Associates with chitin and plays a role in calcification. The sequence is that of Gastrolith matrix protein from Procambarus clarkii (Red swamp crayfish).